The primary structure comprises 635 residues: Surface protein F (635 aa).

The first 37 residues, 1 to 37 (MAKYRGKPFQLYVKLSCSTMMATSIILTNILPYDAQA), serve as a signal peptide directing secretion. Composition is skewed to basic and acidic residues over residues 101–112 (NELDSKDNKSSH) and 193–202 (KSKDASKDTS). Disordered stretches follow at residues 101–122 (NELDSKDNKSSHTEMNGQSDID) and 192–228 (HKSKDASKDTSEDPAVSTTDNNHEVAKTPNNDGSGHV). Residues 597-601 (LPKAG) carry the LPXTG sorting signal motif. Ala600 carries the pentaglycyl murein peptidoglycan amidated alanine modification. The propeptide at 601–635 (GETIKEHWLPISVIVGAMGVLMIWLSRRNKLKNKA) is removed by sortase.

It is found in the secreted. It localises to the cell wall. The chain is Surface protein F from Staphylococcus aureus (strain NCTC 8325 / PS 47).